We begin with the raw amino-acid sequence, 871 residues long: Alanine--tRNA ligase (871 aa).

Residues His561, His565, Cys662, and His666 each coordinate Zn(2+).

The protein belongs to the class-II aminoacyl-tRNA synthetase family. Zn(2+) is required as a cofactor.

The protein resides in the cytoplasm. The catalysed reaction is tRNA(Ala) + L-alanine + ATP = L-alanyl-tRNA(Ala) + AMP + diphosphate. Functionally, catalyzes the attachment of alanine to tRNA(Ala) in a two-step reaction: alanine is first activated by ATP to form Ala-AMP and then transferred to the acceptor end of tRNA(Ala). Also edits incorrectly charged Ser-tRNA(Ala) and Gly-tRNA(Ala) via its editing domain. This is Alanine--tRNA ligase from Dechloromonas aromatica (strain RCB).